The following is a 369-amino-acid chain: Phosphoribosyl pyrophosphate synthase-associated protein 2 (369 aa).

M1 is subject to N-acetylmethionine. Position 5 is a phosphothreonine (T5). Residues S219, S227, and S233 each carry the phosphoserine modification.

The protein belongs to the ribose-phosphate pyrophosphokinase family. Binds to PRPS1 and PRPS2. In terms of tissue distribution, ubiquitous.

Functionally, seems to play a negative regulatory role in 5-phosphoribose 1-diphosphate synthesis. The protein is Phosphoribosyl pyrophosphate synthase-associated protein 2 (PRPSAP2) of Homo sapiens (Human).